Reading from the N-terminus, the 448-residue chain is Tryptophan--tRNA ligase (448 aa).

ATP contacts are provided by residues 10–12 and 18–19; these read TPT and GN. Residues 11–19 carry the 'HIGH' region motif; the sequence is PTGTPHLGN. L-tryptophan is bound at residue Asp143. ATP contacts are provided by residues 155–157, Leu197, and 204–208; these read GRD and KMSKS. Residues 204-208 carry the 'KMSKS' region motif; the sequence is KMSKS.

It belongs to the class-I aminoacyl-tRNA synthetase family. In terms of assembly, homodimer.

It is found in the cytoplasm. It catalyses the reaction tRNA(Trp) + L-tryptophan + ATP = L-tryptophyl-tRNA(Trp) + AMP + diphosphate + H(+). Functionally, catalyzes the attachment of tryptophan to tRNA(Trp). The protein is Tryptophan--tRNA ligase of Pseudomonas aeruginosa (strain ATCC 15692 / DSM 22644 / CIP 104116 / JCM 14847 / LMG 12228 / 1C / PRS 101 / PAO1).